A 304-amino-acid chain; its full sequence is Probable WRKY transcription factor 29 (304 aa).

Disordered stretches follow at residues 76–96 (LPEDSKPFRDDKKQRSHGCLL) and 185–236 (YTNE…IPSA). Residues 78-88 (EDSKPFRDDKK) are compositionally biased toward basic and acidic residues. Residues 128–194 (KEENLLSDAW…YTNEHNHELP (67 aa)) constitute a DNA-binding region (WRKY). Polar residues-rich tracts occupy residues 196-213 (RRNSLAGSTRAKTSQPKP) and 225-236 (SSPTSNPMIPSA).

Belongs to the WRKY group II-e family.

The protein localises to the nucleus. In terms of biological role, transcription factor involved in the expression of defense genes in innate immune response of plants. Interacts specifically with the W box (5'-(T)TGAC[CT]-3'), a frequently occurring elicitor-responsive cis-acting element. Activates WRKY 22, SIRK and its own promoters. The polypeptide is Probable WRKY transcription factor 29 (WRKY29) (Arabidopsis thaliana (Mouse-ear cress)).